Here is a 252-residue protein sequence, read N- to C-terminus: Adenosylcobinamide-GDP ribazoletransferase (252 aa).

The next 7 membrane-spanning stretches (helical) occupy residues 35–55 (AMLP…FYIL), 58–78 (IFPA…LIGG), 113–133 (FAVL…SFII), 139–159 (YAII…FLIG), 170–190 (LFIE…MIVP), 192–212 (VLLI…IITL), and 231–251 (GANN…LLYI).

It belongs to the CobS family. The cofactor is Mg(2+).

The protein resides in the cell membrane. It carries out the reaction alpha-ribazole + adenosylcob(III)inamide-GDP = adenosylcob(III)alamin + GMP + H(+). The catalysed reaction is alpha-ribazole 5'-phosphate + adenosylcob(III)inamide-GDP = adenosylcob(III)alamin 5'-phosphate + GMP + H(+). Its pathway is cofactor biosynthesis; adenosylcobalamin biosynthesis; adenosylcobalamin from cob(II)yrinate a,c-diamide: step 7/7. Functionally, joins adenosylcobinamide-GDP and alpha-ribazole to generate adenosylcobalamin (Ado-cobalamin). Also synthesizes adenosylcobalamin 5'-phosphate from adenosylcobinamide-GDP and alpha-ribazole 5'-phosphate. The polypeptide is Adenosylcobinamide-GDP ribazoletransferase (Clostridium tetani (strain Massachusetts / E88)).